A 146-amino-acid chain; its full sequence is Putative pre-16S rRNA nuclease (146 aa).

Belongs to the YqgF nuclease family.

Its subcellular location is the cytoplasm. Its function is as follows. Could be a nuclease involved in processing of the 5'-end of pre-16S rRNA. The sequence is that of Putative pre-16S rRNA nuclease from Burkholderia mallei (strain SAVP1).